The following is a 1622-amino-acid chain: ABC transporter C family member 1 (1622 aa).

9 consecutive transmembrane segments (helical) span residues 37–57 (FVLG…LWLI), 73–93 (FSYF…FRLV), 110–130 (EAFM…MTVV), 145–165 (FAVI…LSVK), 174–194 (YLYI…FVYF), 336–356 (AWIG…GVLC), 440–460 (VASI…TVII), 527–547 (FILN…FSLL), and 557–577 (FTSL…PNII). An ABC transmembrane type-1 1 domain is found at 302 to 582 (FWWGGFWKIG…LPNIITQMVN (281 aa)). Residues 614 to 838 (ISIRNGYFSW…GPLFQRLMEN (225 aa)) form the ABC transporter 1 domain. 649–656 (GSTGEGKT) lines the ATP pocket. Positions 852-876 (AEVDQTSVKPVENGNANNLQKDGIE) are disordered. Polar residues predominate over residues 855–871 (DQTSVKPVENGNANNLQ). The next 6 membrane-spanning stretches (helical) occupy residues 909–929 (ALGG…TQVF), 951–971 (PLFY…VTLI), 1027–1049 (AVFV…LIGI), 1053–1072 (LSLW…YLYY), 1138–1158 (LGIR…SLAV), and 1172–1192 (STMG…TAVL). One can recognise an ABC transmembrane type-1 2 domain in the interval 916–1200 (VMMLVICYVL…VLRLASLAEN (285 aa)). Residues 1231 to 1246 (WPSSGSIKFEDVVLRY) are interaction with calmodulin and FKP42/TWD1. Residues 1237–1471 (IKFEDVVLRY…GESSFSKMVQ (235 aa)) form the ABC transporter 2 domain. 1271-1278 (GRTGAGKS) lines the ATP pocket.

The protein belongs to the ABC transporter superfamily. ABCC family. Conjugate transporter (TC 3.A.1.208) subfamily. Interacts with calmodulin (CaM), PAS1 and FKBP42/TWD1. In terms of tissue distribution, ubiquitous, with higher levels in leaves and stems and lower levels in roots. Localized in the root apex, root hair tips and root epidermis.

Its subcellular location is the vacuole membrane. It carries out the reaction ATP + H2O + xenobioticSide 1 = ADP + phosphate + xenobioticSide 2.. Its function is as follows. Pump for glutathione S-conjugates. Mediates the transport of S-(2,4-dinitrophenyl)-glutathione (DNP-GS), GSSG, cyanidin 3-glucoside-GS (C3G-GS) and metolachlor-GS (MOC-GS). The protein is ABC transporter C family member 1 (ABCC1) of Arabidopsis thaliana (Mouse-ear cress).